A 346-amino-acid chain; its full sequence is Ketol-acid reductoisomerase (NADP(+)) (346 aa).

The 189-residue stretch at 1–189 folds into the KARI N-terminal Rossmann domain; that stretch reads MQVYYDRDAD…GGGRSGIIET (189 aa). NADP(+) contacts are provided by residues 24–27, Arg48, Ser51, Thr53, and 83–86; these read YGSQ and DEHQ. The active site involves His108. An NADP(+)-binding site is contributed by Gly134. The region spanning 190–335 is the KARI C-terminal knotted domain; that stretch reads TFKEECETDL…EKLRAMMPWI (146 aa). The Mg(2+) site is built by Asp198, Glu202, Glu234, and Glu238. Ser259 is a substrate binding site.

The protein belongs to the ketol-acid reductoisomerase family. It depends on Mg(2+) as a cofactor.

The catalysed reaction is (2R)-2,3-dihydroxy-3-methylbutanoate + NADP(+) = (2S)-2-acetolactate + NADPH + H(+). The enzyme catalyses (2R,3R)-2,3-dihydroxy-3-methylpentanoate + NADP(+) = (S)-2-ethyl-2-hydroxy-3-oxobutanoate + NADPH + H(+). It participates in amino-acid biosynthesis; L-isoleucine biosynthesis; L-isoleucine from 2-oxobutanoate: step 2/4. Its pathway is amino-acid biosynthesis; L-valine biosynthesis; L-valine from pyruvate: step 2/4. Involved in the biosynthesis of branched-chain amino acids (BCAA). Catalyzes an alkyl-migration followed by a ketol-acid reduction of (S)-2-acetolactate (S2AL) to yield (R)-2,3-dihydroxy-isovalerate. In the isomerase reaction, S2AL is rearranged via a Mg-dependent methyl migration to produce 3-hydroxy-3-methyl-2-ketobutyrate (HMKB). In the reductase reaction, this 2-ketoacid undergoes a metal-dependent reduction by NADPH to yield (R)-2,3-dihydroxy-isovalerate. The protein is Ketol-acid reductoisomerase (NADP(+)) of Sphingopyxis alaskensis (strain DSM 13593 / LMG 18877 / RB2256) (Sphingomonas alaskensis).